Reading from the N-terminus, the 357-residue chain is Dehydrogenase FUB6 (357 aa).

It belongs to the zinc-containing alcohol dehydrogenase family. Quinone oxidoreductase subfamily.

Its pathway is mycotoxin biosynthesis. Dehydrogenase; part of the gene cluster that mediates the biosynthesis of fusaric acid, a mycotoxin with low to moderate toxicity to animals and humans, but with high phytotoxic properties. L-aspartate is suggested as fusaric acid amino acid precursor that is activated and further processed to O-acetyl-L-homoserine by cluster enzymes aspartate kinase FUB3 and homoserine O-acetyltransferase FUB5, as well as enzymes of the primary metabolism. The polyketide synthase (PKS) FUB1 generates the triketide trans-2-hexenal which is presumptively released by the hydrolase FUB4 and linked to the NRPS-bound amino acid precursor by NAD(P)-dependent dehydrogenase FUB6. FUB1, FUB4, and the non-canonical NRPS Fub8 may form an enzyme complex. Further processing of the NRPS-bound intermediate might be carried out by FUB6 and the O-acetylhomoserine FUB7, enabling a spontaneous electrocyclization to close the carbon backbone of fusaric acid. Dihydrofusaric acid is likely to be released via reduction by the thioester reductase (TR) domain of FUB8 whereupon the final oxidation to fusaric acid may (also) be performed by the FMN-dependent dehydrogenase FUB9. In Gibberella moniliformis (strain M3125 / FGSC 7600) (Maize ear and stalk rot fungus), this protein is Dehydrogenase FUB6.